Consider the following 239-residue polypeptide: Dihydromethanopterin reductase (acceptor) (239 aa).

4Fe-4S ferredoxin-type domains lie at 144 to 175 and 176 to 205; these read MPYN…EKNG and VTDQ…GGPV. [4Fe-4S] cluster-binding residues include cysteine 153, cysteine 156, cysteine 159, cysteine 165, cysteine 185, cysteine 188, cysteine 191, and cysteine 195.

In terms of assembly, homodimer. Requires [4Fe-4S] cluster as cofactor.

The enzyme catalyses 5,6,7,8-tetrahydromethanopterin + A = 7,8-dihydromethanopterin + AH2. It functions in the pathway cofactor biosynthesis; 5,6,7,8-tetrahydromethanopterin biosynthesis. Its function is as follows. Involved in the biosynthesis of tetrahydromethanopterin, a coenzyme used in methanogenesis. Catalyzes the reduction of dihydromethanopterin (H(2)MPT) to tetrahydromethanopterin (H(4)MPT). Ferredoxin may serve as an electron donor. The chain is Dihydromethanopterin reductase (acceptor) from Methanosarcina mazei (strain ATCC BAA-159 / DSM 3647 / Goe1 / Go1 / JCM 11833 / OCM 88) (Methanosarcina frisia).